Reading from the N-terminus, the 346-residue chain is Dihydroorotase (346 aa).

Residues histidine 14 and histidine 16 each contribute to the Zn(2+) site. Residues 16-18 and asparagine 42 contribute to the substrate site; that span reads HLR. Zn(2+) is bound by residues lysine 100, histidine 137, and histidine 175. Residue lysine 100 is modified to N6-carboxylysine. Histidine 137 is a binding site for substrate. Leucine 220 is a binding site for substrate. A Zn(2+)-binding site is contributed by aspartate 248. Aspartate 248 is an active-site residue. 2 residues coordinate substrate: histidine 252 and alanine 264.

The protein belongs to the metallo-dependent hydrolases superfamily. DHOase family. Class II DHOase subfamily. In terms of assembly, homodimer. Zn(2+) is required as a cofactor.

It catalyses the reaction (S)-dihydroorotate + H2O = N-carbamoyl-L-aspartate + H(+). Its pathway is pyrimidine metabolism; UMP biosynthesis via de novo pathway; (S)-dihydroorotate from bicarbonate: step 3/3. In terms of biological role, catalyzes the reversible cyclization of carbamoyl aspartate to dihydroorotate. In Novosphingobium aromaticivorans (strain ATCC 700278 / DSM 12444 / CCUG 56034 / CIP 105152 / NBRC 16084 / F199), this protein is Dihydroorotase.